Reading from the N-terminus, the 2476-residue chain is Non-reducing polyketide synthase pkdA (2476 aa).

The N-terminal acylcarrier protein transacylase domain (SAT) stretch occupies residues 22-230 (PNLNDAYLQS…VISEARLATL (209 aa)). Cys-142 (nucleophile; for transacylase activity) is an active-site residue. The Proton donor/acceptor; for transacylase activity role is filled by His-261. Positions 388–805 (DESIAVVGMA…GSNASLVVTQ (418 aa)) constitute a Ketosynthase family 3 (KS3) domain. Catalysis depends on for beta-ketoacyl synthase activity residues Cys-554, His-689, and His-728. The tract at residues 919–1204 (FGGQRSSFVG…GSGVTNLASR (286 aa)) is malonyl-CoA:ACP transacylase (MAT). Positions 1290–1417 (QKGLWTFVGY…GRITFQTPKQ (128 aa)) are N-terminal hotdog fold. The 303-residue stretch at 1290–1592 (QKGLWTFVGY…FVEVSIAGMS (303 aa)) folds into the PKS/mFAS DH domain. Residues 1321–1590 (YVSAHVIAQT…LHFVEVSIAG (270 aa)) are product template (PT) domain. The active-site Proton acceptor; for dehydratase activity is the His-1325. The tract at residues 1445 to 1592 (QTIQGSRNIY…FVEVSIAGMS (148 aa)) is C-terminal hotdog fold. Asp-1501 (proton donor; for dehydratase activity) is an active-site residue. The segment at 1626-1649 (DVSKNEKDAKAPSKKKESTSKSPG) is disordered. Residues 1650–1724 (HDILARVRTL…SLVKCIGANM (75 aa)) form the Carrier domain. Position 1684 is an O-(pantetheine 4'-phosphoryl)serine (Ser-1684). The tract at residues 1727–1766 (SDTSRTGDDSSDDLETASAESETSSGINNEDSHNIDRQQI) is disordered. A compositionally biased stretch (low complexity) spans 1742-1751 (TASAESETSS). Positions 1881 to 2030 (ELLRQYPEHA…DCEKTPSSHL (150 aa)) are methyltransferase (CMeT) domain. The tract at residues 2094–2340 (VTGATGSLGS…SWCPVDDVAA (247 aa)) is NADPH-binding domain.

Requires pantetheine 4'-phosphate as cofactor.

The enzyme catalyses propanoyl-CoA + 3 malonyl-CoA + AH2 + 2 S-adenosyl-L-methionine + H(+) = 2-ethyl-4,6-dihydroxy-3,5-dimethylbenzaldehyde + A + 2 S-adenosyl-L-homocysteine + 3 CO2 + 4 CoA + H2O. The protein operates within secondary metabolite biosynthesis. Non-reducing polyketide synthase that synthesizes 6-ethyl-2,4-dihydroxy-3,5-dimethylbenzaldehyde via condensation of one propanoyl-CoA starter unit with 3 malonyl-CoA units, as well as 2 methylation steps. This is Non-reducing polyketide synthase pkdA from Emericella nidulans (strain FGSC A4 / ATCC 38163 / CBS 112.46 / NRRL 194 / M139) (Aspergillus nidulans).